A 116-amino-acid chain; its full sequence is U16-barytoxin-Tl1a (116 aa).

Residues 1–20 form the signal peptide; sequence MKTIIVFLSLLVLATKFGDA. Residues 21-74 constitute a propeptide that is removed on maturation; the sequence is KEGVNQEQKKEVTQNEFRVEYLNEMAAMSLLQQLEAIESALFEKEAGRNSRQKR. 3 disulfide bridges follow: cysteine 75/cysteine 90, cysteine 82/cysteine 95, and cysteine 89/cysteine 110.

The protein belongs to the neurotoxin 14 (magi-1) family. 06 (ICK-Trit) subfamily. Expressed by the venom gland.

It is found in the secreted. Functionally, ion channel inhibitor. This is U16-barytoxin-Tl1a from Trittame loki (Brush-footed trapdoor spider).